A 348-amino-acid polypeptide reads, in one-letter code: Phosphate acyltransferase (348 aa).

This sequence belongs to the PlsX family. As to quaternary structure, homodimer. Probably interacts with PlsY.

It localises to the cytoplasm. The enzyme catalyses a fatty acyl-[ACP] + phosphate = an acyl phosphate + holo-[ACP]. Its pathway is lipid metabolism; phospholipid metabolism. In terms of biological role, catalyzes the reversible formation of acyl-phosphate (acyl-PO(4)) from acyl-[acyl-carrier-protein] (acyl-ACP). This enzyme utilizes acyl-ACP as fatty acyl donor, but not acyl-CoA. The sequence is that of Phosphate acyltransferase from Pectobacterium atrosepticum (strain SCRI 1043 / ATCC BAA-672) (Erwinia carotovora subsp. atroseptica).